A 62-amino-acid chain; its full sequence is UPF0434 protein ABO_2103 (62 aa).

The protein belongs to the UPF0434 family.

The polypeptide is UPF0434 protein ABO_2103 (Alcanivorax borkumensis (strain ATCC 700651 / DSM 11573 / NCIMB 13689 / SK2)).